The following is a 348-amino-acid chain: Neuronal growth regulator 1 (348 aa).

An N-terminal signal peptide occupies residues 1 to 31 (MVLLAQGACCSNQWLAAVLLSLCSCLPAGQS). 3 consecutive Ig-like C2-type domains span residues 32–128 (VDFP…VHLT), 133–215 (PKIY…RVIV), and 219–307 (PTIQ…LPLN). C54 and C112 are oxidised to a cystine. 2 N-linked (GlcNAc...) asparagine glycosylation sites follow: N67 and N149. Cystine bridges form between C154–C197 and C239–C291. The residue at position 181 (Y181) is a Phosphotyrosine. N269, N280, N288, and N301 each carry an N-linked (GlcNAc...) asparagine glycan. G318 carries the GPI-anchor amidated glycine lipid modification. A propeptide spans 319–348 (SACDLFSCWSLALTLSSVISIFYLKNAILQ) (removed in mature form).

It belongs to the immunoglobulin superfamily. IgLON family. In terms of tissue distribution, expressed in brain.

The protein resides in the cell membrane. Functionally, may be involved in cell-adhesion. May function as a trans-neural growth-promoting factor in regenerative axon sprouting in the mammalian brain. The chain is Neuronal growth regulator 1 (Negr1) from Mus musculus (Mouse).